Here is a 76-residue protein sequence, read N- to C-terminus: Small ribosomal subunit protein bS18 (76 aa).

This sequence belongs to the bacterial ribosomal protein bS18 family. Part of the 30S ribosomal subunit. Forms a tight heterodimer with protein bS6.

Its function is as follows. Binds as a heterodimer with protein bS6 to the central domain of the 16S rRNA, where it helps stabilize the platform of the 30S subunit. This chain is Small ribosomal subunit protein bS18, found in Alcanivorax borkumensis (strain ATCC 700651 / DSM 11573 / NCIMB 13689 / SK2).